The sequence spans 104 residues: Cytochrome c6 (104 aa).

A signal peptide spans 1–20 (MKSLLTFILTTIFCIQQVWA). Cys-34, Cys-37, His-38, and Met-78 together coordinate heme c.

This sequence belongs to the cytochrome c family. PetJ subfamily. As to quaternary structure, monomer. Binds 1 heme c group covalently per subunit.

It is found in the plastid. The protein resides in the chloroplast thylakoid lumen. Functions as an electron carrier between membrane-bound cytochrome b6-f and photosystem I in oxygenic photosynthesis. In Cyanidioschyzon merolae (strain NIES-3377 / 10D) (Unicellular red alga), this protein is Cytochrome c6.